We begin with the raw amino-acid sequence, 316 residues long: Small neutral protease regulatory protein (316 aa).

Residues 1–56 (MRHLRALCAIADTGSVRRAARELGVSQPALTTQLRRIEQSLGAELFHRGRDGCRPT) enclose the HTH lysR-type domain. The segment at residues 16–35 (VRRAARELGVSQPALTTQLR) is a DNA-binding region (H-T-H motif).

Belongs to the LysR transcriptional regulatory family.

Functionally, transcriptional trans-activator of the gene (mprA) for the small neutral protease. This chain is Small neutral protease regulatory protein (mprR), found in Streptomyces coelicolor.